Reading from the N-terminus, the 344-residue chain is NADH-ubiquinone oxidoreductase chain 2 (344 aa).

The next 11 helical transmembrane spans lie at 1-21 (MNPL…TITL), 24-44 (FHWL…IPLM), 59-79 (YFLT…ISAW), 94-114 (MNIL…HFWI), 121-141 (ISLP…MALL), 150-170 (LNLT…GGIG), 177-197 (IMAF…KFDP), 201-221 (LLNF…LTTI), 245-265 (LILL…KLLI), 273-293 (NATL…FFYI), and 324-344 (TAIM…LLLL).

The protein belongs to the complex I subunit 2 family.

The protein resides in the mitochondrion inner membrane. The enzyme catalyses a ubiquinone + NADH + 5 H(+)(in) = a ubiquinol + NAD(+) + 4 H(+)(out). Its function is as follows. Core subunit of the mitochondrial membrane respiratory chain NADH dehydrogenase (Complex I) that is believed to belong to the minimal assembly required for catalysis. Complex I functions in the transfer of electrons from NADH to the respiratory chain. The immediate electron acceptor for the enzyme is believed to be ubiquinone. This Aquarana catesbeiana (American bullfrog) protein is NADH-ubiquinone oxidoreductase chain 2 (MT-ND2).